A 400-amino-acid polypeptide reads, in one-letter code: Formate-dependent phosphoribosylglycinamide formyltransferase (400 aa).

Residues 22-23 (EL) and Glu-82 each bind N(1)-(5-phospho-beta-D-ribosyl)glycinamide. ATP is bound by residues Arg-115, Lys-157, 162–167 (SSGKGQ), 197–200 (EGFI), and Glu-205. The ATP-grasp domain occupies 120–315 (RLAAETLGLP…EFELHARAIL (196 aa)). Mg(2+) contacts are provided by Glu-274 and Glu-286. Residues Asp-293, Lys-362, and 369 to 370 (RR) each bind N(1)-(5-phospho-beta-D-ribosyl)glycinamide.

Belongs to the PurK/PurT family. As to quaternary structure, homodimer.

The catalysed reaction is N(1)-(5-phospho-beta-D-ribosyl)glycinamide + formate + ATP = N(2)-formyl-N(1)-(5-phospho-beta-D-ribosyl)glycinamide + ADP + phosphate + H(+). It participates in purine metabolism; IMP biosynthesis via de novo pathway; N(2)-formyl-N(1)-(5-phospho-D-ribosyl)glycinamide from N(1)-(5-phospho-D-ribosyl)glycinamide (formate route): step 1/1. Involved in the de novo purine biosynthesis. Catalyzes the transfer of formate to 5-phospho-ribosyl-glycinamide (GAR), producing 5-phospho-ribosyl-N-formylglycinamide (FGAR). Formate is provided by PurU via hydrolysis of 10-formyl-tetrahydrofolate. The chain is Formate-dependent phosphoribosylglycinamide formyltransferase from Cupriavidus metallidurans (strain ATCC 43123 / DSM 2839 / NBRC 102507 / CH34) (Ralstonia metallidurans).